A 380-amino-acid chain; its full sequence is Dynactin subunit 2 (380 aa).

Residues 1–40 (MADPKFQNLPGIAYDQPDVYETPDDPETDTSDYYEEEPEN) form a disordered region. The span at 21 to 40 (ETPDDPETDTSDYYEEEPEN) shows a compositional bias: acidic residues. Coiled coils occupy residues 100 to 135 (VQKC…QSYD) and 353 to 377 (ETFA…TAIS).

The protein belongs to the dynactin subunit 2 family. As to quaternary structure, subunit of dynactin, a multiprotein complex associated with dynein.

It is found in the cytoplasm. It localises to the cytoskeleton. The protein localises to the membrane. Functionally, modulates cytoplasmic dynein binding to an organelle, and plays a role in prometaphase chromosome alignment and spindle organization during mitosis. May play a role in synapse formation during brain development. This chain is Dynactin subunit 2, found in Drosophila pseudoobscura pseudoobscura (Fruit fly).